A 710-amino-acid polypeptide reads, in one-letter code: MEEMEEELKCPVCGSFYREPIILPCSHNLCQACARNILVQTPESESPQSHRAAGSGVSDYDYLDLDKMSLYSEADSGYGSYGGFASAPTTPCQKSPNGVRVFPPAMPPPATHLSPALAPVPRNSCITCPQCHRSLILDDRGLRGFPKNRVLEGVIDRYQQSKAAALKCQLCEKAPKEATVMCEQCDVFYCDPCRLRCHPPRGPLAKHRLVPPAQGRVSRRLSPRKVSTCTDHELENHSMYCVQCKMPVCYQCLEEGKHSSHEVKALGAMWKLHKSQLSQALNGLSDRAKEAKEFLVQLRNMVQQIQENSVEFEACLVAQCDALIDALNRRKAQLLARVNKEHEHKLKVVRDQISHCTVKLRQTTGLMEYCLEVIKENDPSGFLQISDALIRRVHLTEDQWGKGTLTPRMTTDFDLSLDNSPLLQSIHQLDFVQVKASSPVPATPILQLEECCTHNNSATLSWKQPPLSTVPADGYILELDDGNGGQFREVYVGKETMCTVDGLHFNSTYNARVKAFNKTGVSPYSKTLVLQTSEVAWFAFDPGSAHSDIILSNDNLTVTCSSYDDRVVLGKTGFSKGIHYWELTVDRYDNHPDPAFGVARMDVMKDVMLGKDDKAWAMYVDNNRSWFMHNNSHTNRTEGGITKGATIGVLLDLNRKNLTFFINDEQQGPIAFDNVEGLFFPAVSLNRNVQVTLHTGLPVPDFYSSRASIA.

The segment at Cys-10 to His-50 adopts an RING-type zinc-finger fold. Thr-41 is subject to Phosphothreonine. A phosphoserine mark is found at Ser-44, Ser-46, and Ser-49. B box-type zinc fingers lie at residues Ala-163 to Pro-212 and Arg-224 to Leu-266. Residues Cys-168, Cys-171, Cys-193, His-198, Cys-229, His-232, Cys-252, and His-258 each coordinate Zn(2+). Positions His-273–Lys-340 form a coiled coil. Positions Ile-374 to Val-432 constitute a COS domain. In terms of domain architecture, Fibronectin type-III spans Val-440–Val-535. The 170-residue stretch at Ser-533 to Phe-702 folds into the B30.2/SPRY domain.

This sequence belongs to the TRIM/RBCC family. Interacts with SNAP25. Auto-ubiquitinated. Poly-ubiquitinated in cultured cells, whereas it is monoubiquitinated in vitro. In terms of tissue distribution, brain. Highly expressed in the cerebral cortex (at protein level). Severely decreased in the affected brain areas in Parkinson disease and dementia with Lewy bodies.

It is found in the cytoplasm. It localises to the cell projection. Its subcellular location is the dendrite. The protein resides in the cytoplasmic vesicle. The protein localises to the secretory vesicle. It is found in the synaptic vesicle. It localises to the synapse. Its subcellular location is the cytoskeleton. It catalyses the reaction S-ubiquitinyl-[E2 ubiquitin-conjugating enzyme]-L-cysteine + [acceptor protein]-L-lysine = [E2 ubiquitin-conjugating enzyme]-L-cysteine + N(6)-ubiquitinyl-[acceptor protein]-L-lysine.. It functions in the pathway protein modification; protein ubiquitination. In terms of biological role, E3 ubiquitin-protein ligase which ubiquitinates itself in cooperation with an E2 enzyme UBE2D2/UBC4 and serves as a targeting signal for proteasomal degradation. May play a role in regulation of neuronal functions and may also participate in the formation or breakdown of abnormal inclusions in neurodegenerative disorders. May act as a regulator of synaptic vesicle exocytosis by controlling the availability of SNAP25 for the SNARE complex formation. This Homo sapiens (Human) protein is E3 ubiquitin-protein ligase TRIM9 (TRIM9).